Consider the following 218-residue polypeptide: Monomethylamine corrinoid protein 1 (218 aa).

The B12-binding N-terminal domain occupies 1–91 (MANQEIFDKL…ELEKTKVEGE (91 aa)). Positions 94–218 (TGLAITFVAE…AAKVALNIMK (125 aa)) constitute a B12-binding domain. His107 is a methylcob(III)alamin binding site.

It belongs to the methylamine corrinoid protein family. In terms of assembly, can form a complex with MtmB.

The protein operates within one-carbon metabolism; methanogenesis from methylamine. In terms of biological role, acts as a methyl group carrier between MtmB and MtbA. This Methanosarcina mazei (strain ATCC BAA-159 / DSM 3647 / Goe1 / Go1 / JCM 11833 / OCM 88) (Methanosarcina frisia) protein is Monomethylamine corrinoid protein 1 (mtmC1).